We begin with the raw amino-acid sequence, 954 residues long: Glycine dehydrogenase (decarboxylating) (954 aa).

An N6-(pyridoxal phosphate)lysine modification is found at lysine 704.

It belongs to the GcvP family. In terms of assembly, the glycine cleavage system is composed of four proteins: P, T, L and H. Pyridoxal 5'-phosphate is required as a cofactor.

It carries out the reaction N(6)-[(R)-lipoyl]-L-lysyl-[glycine-cleavage complex H protein] + glycine + H(+) = N(6)-[(R)-S(8)-aminomethyldihydrolipoyl]-L-lysyl-[glycine-cleavage complex H protein] + CO2. Functionally, the glycine cleavage system catalyzes the degradation of glycine. The P protein binds the alpha-amino group of glycine through its pyridoxal phosphate cofactor; CO(2) is released and the remaining methylamine moiety is then transferred to the lipoamide cofactor of the H protein. This Sinorhizobium medicae (strain WSM419) (Ensifer medicae) protein is Glycine dehydrogenase (decarboxylating).